The following is a 31-amino-acid chain: Circulin-B (31 aa).

A cross-link (cyclopeptide (Gly-Asn)) is located at residues 1–31 (GVIPCGESCVFIPCISTLLGCSCKNKVCYRN). Intrachain disulfides connect Cys-5–Cys-21, Cys-9–Cys-23, and Cys-14–Cys-28.

This is a cyclic peptide.

Its function is as follows. Probably participates in a plant defense mechanism. Has antibiotic activity. Inhibits the cytopathic effects and replication of the human immunodeficiency virus. Active against both Gram-positive and Gram-negative bacteria. The chain is Circulin-B from Chassalia parviflora.